A 413-amino-acid chain; its full sequence is Palmitoyltransferase ZDHHC6 (413 aa).

Topologically, residues 1-24 (MGIFCSVIKFENLQDLRRLCHWGP) are cytoplasmic. A helical transmembrane segment spans residues 25–45 (IIALGVIAICSTMAMIDSVLW). Residues 46-57 (YWPLHTTGGSVN) lie on the Lumenal side of the membrane. A helical membrane pass occupies residues 58–78 (FIMLINWTVMILYNYFNAMFA). The Cytoplasmic portion of the chain corresponds to 79–143 (GPGFVPRGWK…NCCGHQNHAS (65 aa)). Positions 99–149 (QYCKVCQAYKAPRSHHCRKCNRCVMKMDHHCPWINNCCGHQNHASFTLFLL) constitute a DHHC domain. Catalysis depends on Cys129, which acts as the S-palmitoyl cysteine intermediate. A helical membrane pass occupies residues 144-164 (FTLFLLLAPLGCTHAAFIFVM). The Lumenal portion of the chain corresponds to 165-194 (TMYTQLYNRLSFGWNTVKIDMSAARRDPPP). The helical transmembrane segment at 195-215 (IVPFGLAAFAATLFALGLALG) threads the bilayer. Residues 216 to 413 (TTIAVGMLFF…PAPEGEKKNR (198 aa)) lie on the Cytoplasmic side of the membrane. The SH3 domain maps to 313–398 (VRSVRYKVIE…PRNCVEKCPC (86 aa)). S-palmitoyl cysteine attachment occurs at residues Cys328, Cys329, and Cys343. A Di-lysine motif motif is present at residues 410–413 (KKNR).

It belongs to the DHHC palmitoyltransferase family. Homooligomerizes. Interacts with SELENOK. Palmitoylated at 3 different sites by ZDHHC16. The combination of the different palmitoylation events strongly affects the quaternary assembly of ZDHHC6, its localization, stability and function. Palmitoylation at Cys-328 accelerates the turnover of ZDHHC6. Depalmitoylated by LYPLA2.

It localises to the endoplasmic reticulum membrane. The catalysed reaction is L-cysteinyl-[protein] + hexadecanoyl-CoA = S-hexadecanoyl-L-cysteinyl-[protein] + CoA. The enzyme catalyses L-cysteinyl-[protein] + octadecanoyl-CoA = S-octadecanoyl-L-cysteinyl-[protein] + CoA. Its function is as follows. Endoplasmic reticulum palmitoyl acyltransferase that mediates palmitoylation of proteins such as AMFR, CALX, ITPR1 and TFRC. Palmitoylates calnexin (CALX), which is required for its association with the ribosome-translocon complex and efficient folding of glycosylated proteins. Mediates palmitoylation of AMFR, promoting AMFR distribution to the peripheral endoplasmic reticulum. Together with SELENOK, palmitoylates ITPR1 in immune cells, leading to regulate ITPR1 stability and function. Stearoyltransferase that mediates stearoylation of TFRC to inhibit TFRC-mediated activation of the JNK pathway and mitochondrial fragmentation. This chain is Palmitoyltransferase ZDHHC6, found in Mus musculus (Mouse).